The sequence spans 254 residues: Acetyl-coenzyme A carboxylase carboxyl transferase subunit beta (254 aa).

The CoA carboxyltransferase N-terminal domain maps to 1 to 254; the sequence is MWLRCPHCHQ…LLKTGSVANE (254 aa). Residues Cys-5, Cys-8, Cys-23, and Cys-26 each coordinate Zn(2+). The C4-type zinc finger occupies 5-26; it reads CPHCHQLLFAKQLTQYAVCPNC.

This sequence belongs to the AccD/PCCB family. Acetyl-CoA carboxylase is a heterohexamer composed of biotin carboxyl carrier protein (AccB), biotin carboxylase (AccC) and two subunits each of ACCase subunit alpha (AccA) and ACCase subunit beta (AccD). Requires Zn(2+) as cofactor.

Its subcellular location is the cytoplasm. It catalyses the reaction N(6)-carboxybiotinyl-L-lysyl-[protein] + acetyl-CoA = N(6)-biotinyl-L-lysyl-[protein] + malonyl-CoA. It functions in the pathway lipid metabolism; malonyl-CoA biosynthesis; malonyl-CoA from acetyl-CoA: step 1/1. Functionally, component of the acetyl coenzyme A carboxylase (ACC) complex. Biotin carboxylase (BC) catalyzes the carboxylation of biotin on its carrier protein (BCCP) and then the CO(2) group is transferred by the transcarboxylase to acetyl-CoA to form malonyl-CoA. The chain is Acetyl-coenzyme A carboxylase carboxyl transferase subunit beta from Limosilactobacillus reuteri (strain DSM 20016) (Lactobacillus reuteri).